Reading from the N-terminus, the 207-residue chain is MSLGLLGNKIGMTQIFDESGNIIPVTILKVGPCVITQVKTDLNDGYNAIQIGYGTVSNKSLTQPELGHLQKSNIQPLKYLKEFRVNNPEEFKVGQVVNVESLSTGQFIDVTGKSSGKGFSGLQKRHNFTRGPMTHGSKNHRAPGSIGMGTTPGRVLPGKKMAGQLGNKVTKTKKLKIIQVNGNENILVVKGSVPGKPGNLVTIHVSN.

Residues 128 to 148 (FTRGPMTHGSKNHRAPGSIGM) are disordered.

Belongs to the universal ribosomal protein uL3 family. Part of the 50S ribosomal subunit.

It is found in the plastid. It localises to the chloroplast. Its function is as follows. One of the primary rRNA binding proteins, it binds directly near the 3'-end of the 23S rRNA, where it nucleates assembly of the 50S subunit. The protein is Large ribosomal subunit protein uL3c (rpl3) of Trieres chinensis (Marine centric diatom).